A 255-amino-acid chain; its full sequence is Ribonuclease PH (255 aa).

Residues Arg86 and 124 to 126 (GTR) contribute to the phosphate site.

It belongs to the RNase PH family. Homohexameric ring arranged as a trimer of dimers.

It catalyses the reaction tRNA(n+1) + phosphate = tRNA(n) + a ribonucleoside 5'-diphosphate. Phosphorolytic 3'-5' exoribonuclease that plays an important role in tRNA 3'-end maturation. Removes nucleotide residues following the 3'-CCA terminus of tRNAs; can also add nucleotides to the ends of RNA molecules by using nucleoside diphosphates as substrates, but this may not be physiologically important. Probably plays a role in initiation of 16S rRNA degradation (leading to ribosome degradation) during starvation. The sequence is that of Ribonuclease PH from Aquifex aeolicus (strain VF5).